A 456-amino-acid chain; its full sequence is MTYDKAELVALDKKYVWHHLTQHKNFEPAIYVKGEGMRITDIDGKTYLDAVSGGVWTVNVGYGRKEIVDAVAKQMMEMCYFANGIGNVPTIKFSEKLISKMPGMSRVYLSNSGSEANEKAFKIVRQIGQLKHGGKKTGILYRARDYHGTTIGTLSACGQFERKVQYGPFAPGFYEFPDCDVYRSKFGDCADLGVKMAKQLEEVILTVGPDELGAVIVEPMTAGGGILVPPAGYYETIREICDKYELLLIIDEVVCGLGRTGKWFGYQHFNVQPDIVTMAKGVASGYAPISCTVTTEKVFQDFVNDPADTDAYFRDISTFGGCTSGPAAALANIEIIERENLLENCTKMGDRLLEGLKGLMAKHPIIGDVRGKGLFAGIEIVKDRATKEPIAEAVANAMVGAAKQAGVLIGKTSRSFREFNNTLTLCPALIATEADIDEIVAGIDKAFTTVEQKFGL.

K280 is subject to N6-(pyridoxal phosphate)lysine.

Belongs to the class-III pyridoxal-phosphate-dependent aminotransferase family. Homotetramer. Pyridoxal 5'-phosphate serves as cofactor.

It catalyses the reaction taurine + pyruvate = sulfoacetaldehyde + L-alanine. It functions in the pathway organosulfur degradation; alkanesulfonate degradation. In terms of biological role, involved in an anaerobic respiration pathway that converts the sulfonate taurine (2-aminoethanesulfonate) to ammonia, acetate and sulfide. Catalyzes the initial metabolic reaction of anaerobic taurine degradation, i.e. the transamination reaction between taurine and pyruvate leading to sulfoacetaldehyde and alanine. The sequence is that of Taurine--pyruvate aminotransferase from Bilophila wadsworthia (strain 3_1_6).